A 127-amino-acid chain; its full sequence is Thioredoxin domain-containing protein 8 (127 aa).

Positions methionine 1–isoleucine 92 constitute a Thioredoxin domain. Cysteines 32 and 35 form a disulfide.

The protein belongs to the thioredoxin family. In terms of tissue distribution, testis-specific. Only expressed during spermiogenesis, prominently in the Golgi apparatus of pachytene spermatocytes and round and elongated spermatids, with a transient localization in the developing acrosome of round spermatids (at protein level).

The protein localises to the cytoplasm. It localises to the golgi apparatus. In terms of biological role, may be required for post-translational modifications of proteins required for acrosomal biogenesis. May act by reducing disulfide bonds within the sperm. In Homo sapiens (Human), this protein is Thioredoxin domain-containing protein 8 (TXNDC8).